Reading from the N-terminus, the 62-residue chain is Sperm protamine P1 (62 aa).

The segment at 1–62 (MARYRHSRSR…RYSRRRRRRY (62 aa)) is disordered.

Belongs to the protamine P1 family. Testis.

Its subcellular location is the nucleus. The protein localises to the chromosome. Functionally, protamines substitute for histones in the chromatin of sperm during the haploid phase of spermatogenesis. They compact sperm DNA into a highly condensed, stable and inactive complex. The polypeptide is Sperm protamine P1 (PRM1) (Notamacropus eugenii (Tammar wallaby)).